A 796-amino-acid chain; its full sequence is Molybdenum cofactor sulfurase (796 aa).

Lys-246 carries the N6-(pyridoxal phosphate)lysine modification. Cys-418 is a catalytic residue. Positions 650–796 (LRLLRQSSQR…LTCGDVVVVT (147 aa)) constitute an MOSC domain. Ser-752 carries the post-translational modification Phosphoserine.

This sequence belongs to the class-V pyridoxal-phosphate-dependent aminotransferase family. MOCOS subfamily. Requires pyridoxal 5'-phosphate as cofactor.

The catalysed reaction is Mo-molybdopterin + L-cysteine + AH2 = thio-Mo-molybdopterin + L-alanine + A + H2O. Functionally, sulfurates the molybdenum cofactor. Sulfation of molybdenum is essential for xanthine dehydrogenase (XDH) and aldehyde oxidase (ADO) enzymes in which molybdenum cofactor is liganded by 1 oxygen and 1 sulfur atom in active form. The chain is Molybdenum cofactor sulfurase from Drosophila persimilis (Fruit fly).